A 377-amino-acid polypeptide reads, in one-letter code: Exopolygalacturonase (377 aa).

The first 5 residues, 1 to 5 (RGVQS), serve as a signal peptide directing secretion. PbH1 repeat units follow at residues 159–184 (CEDI…IHVG), 186–207 (SKGV…SIGP), 209–229 (SQNV…SIGS), 239–260 (VRGI…RVKT), and 269–290 (ATDL…ILDQ). Aspartate 200 functions as the Proton donor in the catalytic mechanism. A glycan (N-linked (GlcNAc...) asparagine) is linked at asparagine 211. The active site involves histidine 223. Asparagine 345 carries an N-linked (GlcNAc...) asparagine glycan.

This sequence belongs to the glycosyl hydrolase 28 family. As to quaternary structure, monomer. Glycosylated. As to expression, expressed in pollen (at protein level). Expressed in stem, but not in leaves (at protein level).

The protein resides in the secreted. It is found in the cell wall. The protein localises to the golgi apparatus. It localises to the endoplasmic reticulum. Its subcellular location is the vesicle. The catalysed reaction is [(1-&gt;4)-alpha-D-galacturonosyl](n) + H2O = alpha-D-galacturonate + [(1-&gt;4)-alpha-D-galacturonosyl](n-1). Its function is as follows. May function in depolymerizing pectin during pollen development, germination, and tube growth. Acts as an exo-polygalacturonase. This chain is Exopolygalacturonase, found in Platanus acerifolia (London plane tree).